The sequence spans 224 residues: Flagellar L-ring protein (224 aa).

Residues 1-15 (MIKYIALASVVLLVG) form the signal peptide. Cys16 carries N-palmitoyl cysteine lipidation. Residue Cys16 is the site of S-diacylglycerol cysteine attachment.

This sequence belongs to the FlgH family. As to quaternary structure, the basal body constitutes a major portion of the flagellar organelle and consists of four rings (L,P,S, and M) mounted on a central rod.

It localises to the cell outer membrane. It is found in the bacterial flagellum basal body. Functionally, assembles around the rod to form the L-ring and probably protects the motor/basal body from shearing forces during rotation. This is Flagellar L-ring protein from Shewanella frigidimarina (strain NCIMB 400).